Consider the following 955-residue polypeptide: Anion exchange protein 4 (955 aa).

Disordered stretches follow at residues 20 to 50 (VGQL…PEDP), 154 to 190 (HTQT…PLRQ), and 331 to 352 (PHRT…PELQ). 4 helical membrane passes run 387–407 (AVLY…GLLG), 415–435 (GVLE…LMAG), 472–492 (VGIW…SVLV), and 503–523 (FCAL…LNLA). The interval 387-955 (AVLYIYLATV…KAPEINISVN (569 aa)) is membrane (anion exchange). N-linked (GlcNAc...) asparagine glycans are attached at residues Asn548 and Asn572. Helical transmembrane passes span 596–616 (VPDI…FAIA), 637–657 (FSSI…GLAM), 684–704 (PWWL…LIFM), 730–750 (LFCV…WYVS), 785–804 (LTGL…APVL), 811–830 (VLYG…IQFM), and 871–891 (LWII…LGLV). A disordered region spans residues 918 to 955 (RNVPEKGLEPGHSFSGSDSEDSELMYQPKAPEINISVN). Residue Asn951 is glycosylated (N-linked (GlcNAc...) asparagine).

Belongs to the anion exchanger (TC 2.A.31) family. Highly expressed in kidney. Expressed in the outer medulla and the inner medulla in the kidney cortex. Only expressed in beta-intercalated cells.

It is found in the lateral cell membrane. It localises to the apical cell membrane. The protein localises to the basolateral cell membrane. The enzyme catalyses 2 hydrogencarbonate(out) + chloride(in) + Na(+)(out) = 2 hydrogencarbonate(in) + chloride(out) + Na(+)(in). The catalysed reaction is K(+)(in) + 2 hydrogencarbonate(in) + chloride(out) = K(+)(out) + 2 hydrogencarbonate(out) + chloride(in). It carries out the reaction Li(+)(in) + 2 hydrogencarbonate(in) + chloride(out) = Li(+)(out) + 2 hydrogencarbonate(out) + chloride(in). It catalyses the reaction Rb(+)(in) + 2 hydrogencarbonate(in) + chloride(out) = Rb(+)(out) + 2 hydrogencarbonate(out) + chloride(in). The enzyme catalyses Cs(+)(in) + 2 hydrogencarbonate(in) + chloride(out) = Cs(+)(out) + 2 hydrogencarbonate(out) + chloride(in). Its function is as follows. Electroneutral Cl(-)/HCO3(-) antiporter that favors chloride ion entry and efflux of hydrogencarbonate and sodium ion across the basolateral membrane and may participat in salivary secretion. Also mediates Cl(-)/HCO3(-) exchange activity in the presence of K(+) as well as Cs(+), Li(+), and Rb(+). Does not contribute to Cl(-)/HCO3(-) exchanger in the apical membrane of the upper villous epithelium. The polypeptide is Anion exchange protein 4 (Oryctolagus cuniculus (Rabbit)).